The chain runs to 156 residues: ATP synthase subunit b (156 aa).

Residues 7–29 (LIGQSLTFIAFILFCMKYVWPQL) traverse the membrane as a helical segment.

It belongs to the ATPase B chain family. As to quaternary structure, F-type ATPases have 2 components, F(1) - the catalytic core - and F(0) - the membrane proton channel. F(1) has five subunits: alpha(3), beta(3), gamma(1), delta(1), epsilon(1). F(0) has three main subunits: a(1), b(2) and c(10-14). The alpha and beta chains form an alternating ring which encloses part of the gamma chain. F(1) is attached to F(0) by a central stalk formed by the gamma and epsilon chains, while a peripheral stalk is formed by the delta and b chains.

Its subcellular location is the cell inner membrane. F(1)F(0) ATP synthase produces ATP from ADP in the presence of a proton or sodium gradient. F-type ATPases consist of two structural domains, F(1) containing the extramembraneous catalytic core and F(0) containing the membrane proton channel, linked together by a central stalk and a peripheral stalk. During catalysis, ATP synthesis in the catalytic domain of F(1) is coupled via a rotary mechanism of the central stalk subunits to proton translocation. In terms of biological role, component of the F(0) channel, it forms part of the peripheral stalk, linking F(1) to F(0). The protein is ATP synthase subunit b of Saccharophagus degradans (strain 2-40 / ATCC 43961 / DSM 17024).